The following is an 87-amino-acid chain: Phosphocarrier protein HPr (87 aa).

Residues 1 to 87 (MASKDFHIVA…AETMTKEGLA (87 aa)) enclose the HPr domain. His-15 functions as the Pros-phosphohistidine intermediate in the catalytic mechanism. Phosphoserine; by HPrK/P is present on Ser-46.

This sequence belongs to the HPr family.

It localises to the cytoplasm. Phosphorylation on Ser-46 inhibits the phosphoryl transfer from enzyme I to HPr. Functionally, general (non sugar-specific) component of the phosphoenolpyruvate-dependent sugar phosphotransferase system (sugar PTS). This major carbohydrate active-transport system catalyzes the phosphorylation of incoming sugar substrates concomitantly with their translocation across the cell membrane. The phosphoryl group from phosphoenolpyruvate (PEP) is transferred to the phosphoryl carrier protein HPr by enzyme I. Phospho-HPr then transfers it to the PTS EIIA domain. P-Ser-HPr interacts with the catabolite control protein A (CcpA), forming a complex that binds to DNA at the catabolite response elements cre, operator sites preceding a large number of catabolite-regulated genes. Thus, P-Ser-HPr is a corepressor in carbon catabolite repression (CCR), a mechanism that allows bacteria to coordinate and optimize the utilization of available carbon sources. P-Ser-HPr also plays a role in inducer exclusion, in which it probably interacts with several non-PTS permeases and inhibits their transport activity. The protein is Phosphocarrier protein HPr (ptsH) of Streptococcus salivarius.